The sequence spans 397 residues: Riboflavin biosynthesis protein RibBA (397 aa).

The segment at 1 to 199 (MFHRIEEALE…IEDLIAYRRH (199 aa)) is DHBP synthase. Residues 26–27 (RE), Asp31, 138–142 (RAGHT), and Glu162 each bind D-ribulose 5-phosphate. Glu27 contacts Mg(2+). Mg(2+) is bound at residue His141. Positions 200 to 397 (HETLVTREAE…VNKLGHLLNL (198 aa)) are GTP cyclohydrolase II. 250-254 (RVHSE) lines the GTP pocket. Positions 255, 266, and 268 each coordinate Zn(2+). Residues Gln271, 293-295 (EGR), and Thr315 contribute to the GTP site. The active-site Proton acceptor; for GTP cyclohydrolase activity is the Asp327. Residue Arg329 is the Nucleophile; for GTP cyclohydrolase activity of the active site. GTP contacts are provided by Thr350 and Lys355.

It in the N-terminal section; belongs to the DHBP synthase family. This sequence in the C-terminal section; belongs to the GTP cyclohydrolase II family. Requires Mg(2+) as cofactor. Mn(2+) serves as cofactor. The cofactor is Zn(2+).

The enzyme catalyses D-ribulose 5-phosphate = (2S)-2-hydroxy-3-oxobutyl phosphate + formate + H(+). It carries out the reaction GTP + 4 H2O = 2,5-diamino-6-hydroxy-4-(5-phosphoribosylamino)-pyrimidine + formate + 2 phosphate + 3 H(+). It functions in the pathway cofactor biosynthesis; riboflavin biosynthesis; 2-hydroxy-3-oxobutyl phosphate from D-ribulose 5-phosphate: step 1/1. It participates in cofactor biosynthesis; riboflavin biosynthesis; 5-amino-6-(D-ribitylamino)uracil from GTP: step 1/4. Catalyzes the conversion of D-ribulose 5-phosphate to formate and 3,4-dihydroxy-2-butanone 4-phosphate. Its function is as follows. Catalyzes the conversion of GTP to 2,5-diamino-6-ribosylamino-4(3H)-pyrimidinone 5'-phosphate (DARP), formate and pyrophosphate. This is Riboflavin biosynthesis protein RibBA from Bacillus cereus (strain ATCC 14579 / DSM 31 / CCUG 7414 / JCM 2152 / NBRC 15305 / NCIMB 9373 / NCTC 2599 / NRRL B-3711).